A 325-amino-acid chain; its full sequence is Small ribosomal subunit protein uS4m (325 aa).

The region spanning 146–209 (KRIDMILLRS…HKQNLIHRLK (64 aa)) is the S4 RNA-binding domain.

This sequence belongs to the universal ribosomal protein uS4 family.

Its subcellular location is the mitochondrion. This is Small ribosomal subunit protein uS4m (mrps4) from Dictyostelium citrinum (Slime mold).